We begin with the raw amino-acid sequence, 412 residues long: Class E basic helix-loop-helix protein 40 (412 aa).

Residues 1–139 (MERIPSAQPP…LSGRNVETGQ (139 aa)) form an essential for interaction with BMAL1, E-box binding and repressor activity against the CLOCK-BMAL1 heterodimer region. One can recognise a bHLH domain in the interval 52–107 (TYKLPHRLIEKKRRDRINECIAQLKDLLPEHLKLTTLGHLEKAVVLELTLKHVKAL). Residues 75-79 (LKDLL) are necessary for interaction with RXRA and repressor activity against RXRA. One can recognise an Orange domain in the interval 142–175 (FCSGFQTCAREVLQYLAKHENTRDLKSSQLVTHL). A Glycyl lysine isopeptide (Lys-Gly) (interchain with G-Cter in SUMO1, SUMO2 and SUMO3) cross-link involves residue Lys-159. Residue Lys-167 forms a Glycyl lysine isopeptide (Lys-Gly) (interchain with G-Cter in SUMO2) linkage. Disordered regions lie at residues 183–259 (LQGG…SEQL) and 275–309 (IGAI…LISS). Position 235 is a phosphoserine (Ser-235). Basic and acidic residues predominate over residues 248 to 259 (ESEKGDLRSEQL). Lys-279 is covalently cross-linked (Glycyl lysine isopeptide (Lys-Gly) (interchain with G-Cter in SUMO1); alternate). Residue Lys-279 forms a Glycyl lysine isopeptide (Lys-Gly) (interchain with G-Cter in SUMO1, SUMO2 and SUMO3); alternate linkage. Lys-279 is covalently cross-linked (Glycyl lysine isopeptide (Lys-Gly) (interchain with G-Cter in SUMO2); alternate). A Glycyl lysine isopeptide (Lys-Gly) (interchain with G-Cter in SUMO2) cross-link involves residue Lys-288. The residue at position 383 (Ser-383) is a Phosphoserine.

In terms of assembly, homodimer. Heterodimer with BHLHE41/DEC2. Interacts with TCF3/E47. Interacts with ubiquitin-conjugating enzyme UBE2I/UBC9. Interacts with HDAC1, SUMO1, RXRA and BMAL1. Post-translationally, ubiquitinated; which may lead to proteasomal degradation. In terms of processing, sumoylation inhibits its ubiquitination and promotes its negative regulation of the CLOCK-BMAL1 heterodimer transcriptional activator activity.

Its subcellular location is the cytoplasm. It is found in the nucleus. Transcriptional repressor involved in the regulation of the circadian rhythm by negatively regulating the activity of the clock genes and clock-controlled genes. Acts as the negative limb of a novel autoregulatory feedback loop (DEC loop) which differs from the one formed by the PER and CRY transcriptional repressors (PER/CRY loop). Both these loops are interlocked as it represses the expression of PER1/2 and in turn is repressed by PER1/2 and CRY1/2. Represses the activity of the circadian transcriptional activator: CLOCK-BMAL1|BMAL2 heterodimer by competing for the binding to E-box elements (5'-CACGTG-3') found within the promoters of its target genes. Negatively regulates its own expression and the expression of DBP and BHLHE41/DEC2. Acts as a corepressor of RXR and the RXR-LXR heterodimers and represses the ligand-induced RXRA and NR1H3/LXRA transactivation activity. May be involved in the regulation of chondrocyte differentiation via the cAMP pathway. Represses the transcription of NR0B2 and attentuates the transactivation of NR0B2 by the CLOCK-BMAL1 complex. Drives the circadian rhythm of blood pressure through transcriptional repression of ATP1B1 in the cardiovascular system. The chain is Class E basic helix-loop-helix protein 40 (BHLHE40) from Pongo abelii (Sumatran orangutan).